Consider the following 385-residue polypeptide: Centrosomal protein of 44 kDa (385 aa).

Residues 11 to 191 form a binds with microtubules and centrioles region; it reads RKLEQRLRTL…TKCYKSALLE (181 aa). The segment covering 194–204 has biased composition (acidic residues); the sequence is EEEEPTSDCEE. Positions 194–224 are disordered; that stretch reads EEEEPTSDCEEDSHLQREMGSPFETAEETPN. Coiled coils occupy residues 224–263 and 353–379; these read NSEQ…KGKI and TEES…ELLK.

In terms of assembly, binds to centriolar microtubules.

Its subcellular location is the cytoplasm. It is found in the cytoskeleton. It localises to the microtubule organizing center. The protein resides in the centrosome. The protein localises to the centriole. Its subcellular location is the spindle pole. It is found in the midbody. Functionally, centriole-enriched microtubule-binding protein involved in centriole biogenesis. In collaboration with CEP295 and POC1B, is required for the centriole-to-centrosome conversion by ensuring the formation of bona fide centriole wall. Functions as a linker component that maintains centrosome cohesion. Associates with CROCC and regulates its stability and localization to the centrosome. This is Centrosomal protein of 44 kDa (cep44) from Xenopus tropicalis (Western clawed frog).